Reading from the N-terminus, the 75-residue chain is U6-lycotoxin-Ls1d (75 aa).

The signal sequence occupies residues 1–21 (MKLLFFTALVLVVISLIEVEA). A propeptide spanning residues 22–25 (ENER) is cleaved from the precursor.

Belongs to the neurotoxin 19 (CSTX) family. 06 (U6-Lctx) subfamily. Contains 4 disulfide bonds. As to expression, expressed by the venom gland.

The protein localises to the secreted. This Lycosa singoriensis (Wolf spider) protein is U6-lycotoxin-Ls1d.